The chain runs to 267 residues: DNA repair protein RecO (267 aa).

The protein belongs to the RecO family.

Functionally, involved in DNA repair and RecF pathway recombination. The protein is DNA repair protein RecO of Mesoplasma florum (strain ATCC 33453 / NBRC 100688 / NCTC 11704 / L1) (Acholeplasma florum).